A 132-amino-acid polypeptide reads, in one-letter code: Large ribosomal subunit protein uL14 (132 aa).

The protein belongs to the universal ribosomal protein uL14 family. Part of the 50S ribosomal subunit. Forms a cluster with proteins L3 and L24e, part of which may contact the 16S rRNA in 2 intersubunit bridges.

In terms of biological role, binds to 23S rRNA. Forms part of two intersubunit bridges in the 70S ribosome. The chain is Large ribosomal subunit protein uL14 from Methanospirillum hungatei JF-1 (strain ATCC 27890 / DSM 864 / NBRC 100397 / JF-1).